The sequence spans 435 residues: Aspartate--tRNA(Asp/Asn) ligase (435 aa).

E163 is an L-aspartate binding site. The tract at residues 185-188 (QLYK) is aspartate. R206 serves as a coordination point for L-aspartate. ATP-binding positions include 206-208 (RAE), 214-216 (RHL), and E358. Residues S361 and R365 each contribute to the L-aspartate site. An ATP-binding site is contributed by 406 to 409 (GAER).

Belongs to the class-II aminoacyl-tRNA synthetase family. Type 2 subfamily. As to quaternary structure, homodimer.

Its subcellular location is the cytoplasm. The catalysed reaction is tRNA(Asx) + L-aspartate + ATP = L-aspartyl-tRNA(Asx) + AMP + diphosphate. Aspartyl-tRNA synthetase with relaxed tRNA specificity since it is able to aspartylate not only its cognate tRNA(Asp) but also tRNA(Asn). Reaction proceeds in two steps: L-aspartate is first activated by ATP to form Asp-AMP and then transferred to the acceptor end of tRNA(Asp/Asn). Is slightly more efficient at aminoacylating tRNA(Asn) over tRNA(Asp). In Deinococcus radiodurans (strain ATCC 13939 / DSM 20539 / JCM 16871 / CCUG 27074 / LMG 4051 / NBRC 15346 / NCIMB 9279 / VKM B-1422 / R1), this protein is Aspartate--tRNA(Asp/Asn) ligase (aspS2).